Reading from the N-terminus, the 161-residue chain is Peroxynitrite isomerase 2 (161 aa).

The GXWXGXG motif lies at 17 to 23; it reads GTWTGRG. Residue histidine 152 participates in heme b binding.

The protein belongs to the nitrobindin family. In terms of assembly, homodimer. Requires heme b as cofactor.

It catalyses the reaction peroxynitrite = nitrate. The protein operates within nitrogen metabolism. In terms of biological role, heme-binding protein able to scavenge peroxynitrite and to protect free L-tyrosine against peroxynitrite-mediated nitration, by acting as a peroxynitrite isomerase that converts peroxynitrite to nitrate. Therefore, this protein likely plays a role in peroxynitrite sensing and in the detoxification of reactive nitrogen and oxygen species (RNS and ROS, respectively). Is able to bind nitric oxide (NO) in vitro, but may act as a sensor of peroxynitrite levels in vivo. This Mycobacterium avium (strain 104) protein is Peroxynitrite isomerase 2.